Here is a 122-residue protein sequence, read N- to C-terminus: Large ribosomal subunit protein uL18 (122 aa).

Belongs to the universal ribosomal protein uL18 family. In terms of assembly, part of the 50S ribosomal subunit; part of the 5S rRNA/L5/L18/L25 subcomplex. Contacts the 5S and 23S rRNAs.

This is one of the proteins that bind and probably mediate the attachment of the 5S RNA into the large ribosomal subunit, where it forms part of the central protuberance. The polypeptide is Large ribosomal subunit protein uL18 (Desulforapulum autotrophicum (strain ATCC 43914 / DSM 3382 / VKM B-1955 / HRM2) (Desulfobacterium autotrophicum)).